The primary structure comprises 103 residues: Co-chaperonin GroES (103 aa).

The protein belongs to the GroES chaperonin family. As to quaternary structure, heptamer of 7 subunits arranged in a ring. Interacts with the chaperonin GroEL.

The protein resides in the cytoplasm. Its function is as follows. Together with the chaperonin GroEL, plays an essential role in assisting protein folding. The GroEL-GroES system forms a nano-cage that allows encapsulation of the non-native substrate proteins and provides a physical environment optimized to promote and accelerate protein folding. GroES binds to the apical surface of the GroEL ring, thereby capping the opening of the GroEL channel. The polypeptide is Co-chaperonin GroES (Trichodesmium erythraeum (strain IMS101)).